Here is a 355-residue protein sequence, read N- to C-terminus: Peptide chain release factor 1 (355 aa).

Gln233 is modified (N5-methylglutamine).

Belongs to the prokaryotic/mitochondrial release factor family. Post-translationally, methylated by PrmC. Methylation increases the termination efficiency of RF1.

Its subcellular location is the cytoplasm. In terms of biological role, peptide chain release factor 1 directs the termination of translation in response to the peptide chain termination codons UAG and UAA. The chain is Peptide chain release factor 1 from Desulforudis audaxviator (strain MP104C).